A 229-amino-acid chain; its full sequence is DNA mismatch repair protein MutH (229 aa).

Belongs to the MutH family.

Its subcellular location is the cytoplasm. Its function is as follows. Sequence-specific endonuclease that cleaves unmethylated GATC sequences. It is involved in DNA mismatch repair. The protein is DNA mismatch repair protein MutH of Escherichia coli (strain SMS-3-5 / SECEC).